The chain runs to 365 residues: Cobalt-precorrin-5B C(1)-methyltransferase (365 aa).

The protein belongs to the CbiD family.

It catalyses the reaction Co-precorrin-5B + S-adenosyl-L-methionine = Co-precorrin-6A + S-adenosyl-L-homocysteine. It participates in cofactor biosynthesis; adenosylcobalamin biosynthesis; cob(II)yrinate a,c-diamide from sirohydrochlorin (anaerobic route): step 6/10. In terms of biological role, catalyzes the methylation of C-1 in cobalt-precorrin-5B to form cobalt-precorrin-6A. The chain is Cobalt-precorrin-5B C(1)-methyltransferase from Clostridium perfringens (strain ATCC 13124 / DSM 756 / JCM 1290 / NCIMB 6125 / NCTC 8237 / Type A).